The primary structure comprises 263 residues: UPF0739 protein C1orf74 homolog (263 aa).

This sequence belongs to the UPF0739 family.

The chain is UPF0739 protein C1orf74 homolog from Mus musculus (Mouse).